A 616-amino-acid chain; its full sequence is Dihydroxy-acid dehydratase (616 aa).

Position 81 (D81) interacts with Mg(2+). C122 is a binding site for [2Fe-2S] cluster. Residues D123 and K124 each contribute to the Mg(2+) site. At K124 the chain carries N6-carboxylysine. Position 195 (C195) interacts with [2Fe-2S] cluster. Residue E491 participates in Mg(2+) binding. The active-site Proton acceptor is S517.

The protein belongs to the IlvD/Edd family. As to quaternary structure, homodimer. It depends on [2Fe-2S] cluster as a cofactor. The cofactor is Mg(2+).

The catalysed reaction is (2R)-2,3-dihydroxy-3-methylbutanoate = 3-methyl-2-oxobutanoate + H2O. It catalyses the reaction (2R,3R)-2,3-dihydroxy-3-methylpentanoate = (S)-3-methyl-2-oxopentanoate + H2O. It functions in the pathway amino-acid biosynthesis; L-isoleucine biosynthesis; L-isoleucine from 2-oxobutanoate: step 3/4. The protein operates within amino-acid biosynthesis; L-valine biosynthesis; L-valine from pyruvate: step 3/4. Functions in the biosynthesis of branched-chain amino acids. Catalyzes the dehydration of (2R,3R)-2,3-dihydroxy-3-methylpentanoate (2,3-dihydroxy-3-methylvalerate) into 2-oxo-3-methylpentanoate (2-oxo-3-methylvalerate) and of (2R)-2,3-dihydroxy-3-methylbutanoate (2,3-dihydroxyisovalerate) into 2-oxo-3-methylbutanoate (2-oxoisovalerate), the penultimate precursor to L-isoleucine and L-valine, respectively. This chain is Dihydroxy-acid dehydratase, found in Shigella boydii serotype 4 (strain Sb227).